We begin with the raw amino-acid sequence, 264 residues long: 3-methyl-2-oxobutanoate hydroxymethyltransferase (264 aa).

Mg(2+)-binding residues include D45 and D84. Residues 45-46 (DS), D84, and K112 contribute to the 3-methyl-2-oxobutanoate site. Position 114 (E114) interacts with Mg(2+). The active-site Proton acceptor is E181.

This sequence belongs to the PanB family. Homodecamer; pentamer of dimers. It depends on Mg(2+) as a cofactor.

The protein localises to the cytoplasm. It carries out the reaction 3-methyl-2-oxobutanoate + (6R)-5,10-methylene-5,6,7,8-tetrahydrofolate + H2O = 2-dehydropantoate + (6S)-5,6,7,8-tetrahydrofolate. Its pathway is cofactor biosynthesis; (R)-pantothenate biosynthesis; (R)-pantoate from 3-methyl-2-oxobutanoate: step 1/2. Catalyzes the reversible reaction in which hydroxymethyl group from 5,10-methylenetetrahydrofolate is transferred onto alpha-ketoisovalerate to form ketopantoate. The chain is 3-methyl-2-oxobutanoate hydroxymethyltransferase from Escherichia coli O127:H6 (strain E2348/69 / EPEC).